The primary structure comprises 354 residues: S-adenosylmethionine:tRNA ribosyltransferase-isomerase (354 aa).

This sequence belongs to the QueA family. As to quaternary structure, monomer.

It localises to the cytoplasm. It catalyses the reaction 7-aminomethyl-7-carbaguanosine(34) in tRNA + S-adenosyl-L-methionine = epoxyqueuosine(34) in tRNA + adenine + L-methionine + 2 H(+). It participates in tRNA modification; tRNA-queuosine biosynthesis. Its function is as follows. Transfers and isomerizes the ribose moiety from AdoMet to the 7-aminomethyl group of 7-deazaguanine (preQ1-tRNA) to give epoxyqueuosine (oQ-tRNA). The polypeptide is S-adenosylmethionine:tRNA ribosyltransferase-isomerase (Salmonella paratyphi A (strain ATCC 9150 / SARB42)).